A 272-amino-acid chain; its full sequence is DKKIYALRDVTGTVQSIPLIASSIMSKKLATGSNCILLDVKCGNGAFMKDINEAKKLGKLMIEIGKKLNRKIAVEITNMQQPLGKTIGNKIEVLEAIDTLNGHGPKDFTEIIYSSGSTLLVLAQKAKDEVEARKMIDEVINNKKAYNKFLEWISRQGGNIKVFEKDSKWFNPQYKQEIIASQSGYLKIKSRIDFGLVAMKLGAGRSKKEDSIDYEAGIYLNKSSNEYVNKGDVLFTMYSSKPINPELQKELLSAIEFSESKHDIQTVFAKLM.

The protein belongs to the thymidine/pyrimidine-nucleoside phosphorylase family. Homodimer.

The catalysed reaction is thymidine + phosphate = 2-deoxy-alpha-D-ribose 1-phosphate + thymine. Functionally, the enzymes which catalyze the reversible phosphorolysis of pyrimidine nucleosides are involved in the degradation of these compounds and in their utilization as carbon and energy sources, or in the rescue of pyrimidine bases for nucleotide synthesis. This Metamycoplasma hominis (Mycoplasma hominis) protein is Thymidine phosphorylase (deoA).